We begin with the raw amino-acid sequence, 343 residues long: Ribosomal RNA small subunit methyltransferase C (343 aa).

Belongs to the methyltransferase superfamily. RsmC family. Monomer.

The protein resides in the cytoplasm. The enzyme catalyses guanosine(1207) in 16S rRNA + S-adenosyl-L-methionine = N(2)-methylguanosine(1207) in 16S rRNA + S-adenosyl-L-homocysteine + H(+). Its function is as follows. Specifically methylates the guanine in position 1207 of 16S rRNA in the 30S particle. The sequence is that of Ribosomal RNA small subunit methyltransferase C from Shigella flexneri.